The primary structure comprises 264 residues: Phosphatidylinositol transfer protein 1 (264 aa).

The segment at 151-174 is disordered; it reads NYKETEDPTKIRSEKANRGPLEEE. Positions 238–264 form a coiled coil; the sequence is VRAFELKTKEDLKKKLEEKDENKAAEK.

It belongs to the PtdIns transfer protein family. PI transfer class I subfamily. In terms of processing, phosphorylated in response to activation of rasG.

It localises to the cytoplasm. The protein resides in the golgi apparatus. Functionally, catalyzes the transfer of PtdIns and phosphatidylcholine between membranes. The sequence is that of Phosphatidylinositol transfer protein 1 (pitA) from Dictyostelium discoideum (Social amoeba).